The chain runs to 213 residues: Ribosomal RNA large subunit methyltransferase E (213 aa).

Positions 68, 70, 88, 104, and 127 each coordinate S-adenosyl-L-methionine. Lys167 acts as the Proton acceptor in catalysis.

This sequence belongs to the class I-like SAM-binding methyltransferase superfamily. RNA methyltransferase RlmE family.

Its subcellular location is the cytoplasm. The catalysed reaction is uridine(2552) in 23S rRNA + S-adenosyl-L-methionine = 2'-O-methyluridine(2552) in 23S rRNA + S-adenosyl-L-homocysteine + H(+). In terms of biological role, specifically methylates the uridine in position 2552 of 23S rRNA at the 2'-O position of the ribose in the fully assembled 50S ribosomal subunit. This chain is Ribosomal RNA large subunit methyltransferase E, found in Neorickettsia sennetsu (strain ATCC VR-367 / Miyayama) (Ehrlichia sennetsu).